A 281-amino-acid polypeptide reads, in one-letter code: 4-diphosphocytidyl-2-C-methyl-D-erythritol kinase (281 aa).

Catalysis depends on residues Lys11 and Asp138.

It belongs to the GHMP kinase family. IspE subfamily.

The catalysed reaction is 4-CDP-2-C-methyl-D-erythritol + ATP = 4-CDP-2-C-methyl-D-erythritol 2-phosphate + ADP + H(+). The protein operates within isoprenoid biosynthesis; isopentenyl diphosphate biosynthesis via DXP pathway; isopentenyl diphosphate from 1-deoxy-D-xylulose 5-phosphate: step 3/6. Its function is as follows. Catalyzes the phosphorylation of the position 2 hydroxy group of 4-diphosphocytidyl-2C-methyl-D-erythritol. This Pelagibacter ubique (strain HTCC1062) protein is 4-diphosphocytidyl-2-C-methyl-D-erythritol kinase.